The primary structure comprises 283 residues: Bifunctional protein FolD (283 aa).

NADP(+) is bound by residues 166–168 and Ile-232; that span reads GAS.

It belongs to the tetrahydrofolate dehydrogenase/cyclohydrolase family. Homodimer.

The enzyme catalyses (6R)-5,10-methylene-5,6,7,8-tetrahydrofolate + NADP(+) = (6R)-5,10-methenyltetrahydrofolate + NADPH. It carries out the reaction (6R)-5,10-methenyltetrahydrofolate + H2O = (6R)-10-formyltetrahydrofolate + H(+). It functions in the pathway one-carbon metabolism; tetrahydrofolate interconversion. Functionally, catalyzes the oxidation of 5,10-methylenetetrahydrofolate to 5,10-methenyltetrahydrofolate and then the hydrolysis of 5,10-methenyltetrahydrofolate to 10-formyltetrahydrofolate. This Wigglesworthia glossinidia brevipalpis protein is Bifunctional protein FolD.